The chain runs to 204 residues: Protein GrpE (204 aa).

The segment at 1 to 42 (MTDETAKNGPDAAADAQIEPQVQEETNSTAEDAGQDNNPTAA) is disordered. A compositionally biased stretch (polar residues) spans 23–41 (QEETNSTAEDAGQDNNPTA).

This sequence belongs to the GrpE family. In terms of assembly, homodimer.

It is found in the cytoplasm. Its function is as follows. Participates actively in the response to hyperosmotic and heat shock by preventing the aggregation of stress-denatured proteins, in association with DnaK and GrpE. It is the nucleotide exchange factor for DnaK and may function as a thermosensor. Unfolded proteins bind initially to DnaJ; upon interaction with the DnaJ-bound protein, DnaK hydrolyzes its bound ATP, resulting in the formation of a stable complex. GrpE releases ADP from DnaK; ATP binding to DnaK triggers the release of the substrate protein, thus completing the reaction cycle. Several rounds of ATP-dependent interactions between DnaJ, DnaK and GrpE are required for fully efficient folding. This chain is Protein GrpE, found in Allorhizobium ampelinum (strain ATCC BAA-846 / DSM 112012 / S4) (Agrobacterium vitis (strain S4)).